The sequence spans 353 residues: Purine nucleoside phosphorylase (353 aa).

Positions 1 to 16 (MSKFSYLQNGKASTNG) are enriched in polar residues. The segment at 1–42 (MSKFSYLQNGKASTNGVPHANGHHQQHQNGHSNGVARNGGTA) is disordered. Phosphate is bound by residues Ser98, His129, 149–151 (RFH), and Ala181. Glu266 lines the a purine D-ribonucleoside pocket. Residue Ser285 participates in phosphate binding. Asn308 is an a purine D-ribonucleoside binding site.

It belongs to the PNP/MTAP phosphorylase family. Homotrimer.

It carries out the reaction inosine + phosphate = alpha-D-ribose 1-phosphate + hypoxanthine. The catalysed reaction is guanosine + phosphate = alpha-D-ribose 1-phosphate + guanine. The enzyme catalyses 2'-deoxyguanosine + phosphate = 2-deoxy-alpha-D-ribose 1-phosphate + guanine. It catalyses the reaction 2'-deoxyinosine + phosphate = 2-deoxy-alpha-D-ribose 1-phosphate + hypoxanthine. It functions in the pathway purine metabolism; purine nucleoside salvage. Its activity is regulated as follows. Inhibited by 5'-deaza-1'-aza-2c-deoxy-1'-(9-methylene) immucillin-H (DADMe-ImmH). In terms of biological role, as part of the purine salvage pathway, catalyzes the phosphorolytic breakdown of the N-glycosidic bond in the beta-(deoxy)ribonucleoside molecules, with the formation of the corresponding free purine bases and pentose-1-phosphate. Preferentially acts on 2'-deoxyinosine and inosine, and to a lesser extent on 2'-deoxyguanosine and guanosine. Has no activity towards adenosine or 2'-deoxyadenosine. The chain is Purine nucleoside phosphorylase from Anopheles gambiae (African malaria mosquito).